Reading from the N-terminus, the 38-residue chain is Large ribosomal subunit protein bL36 (38 aa).

Belongs to the bacterial ribosomal protein bL36 family.

The polypeptide is Large ribosomal subunit protein bL36 (Lactobacillus johnsonii (strain CNCM I-12250 / La1 / NCC 533)).